The chain runs to 201 residues: MEQPDLFGTLAPLPAIIAGVDEAGRGPLAGAVYAAAVILDPDRPVDGLADSKVLKAEQREALAVQIRAQALAWFVASASVQEIDSLNILRATMLAMQRAVAGLAMAPELAMVDGNQAPKLRCAVQTVIKGDALVPAISAASILAKTARDADLLRLHALYPQYGFDQHKGYGTPQHLSLLREHGPCPEHRRSFAPIKAYGAP.

One can recognise an RNase H type-2 domain in the interval 15–201 (AIIAGVDEAG…FAPIKAYGAP (187 aa)). Residues Asp21, Glu22, and Asp113 each contribute to the a divalent metal cation site.

It belongs to the RNase HII family. It depends on Mn(2+) as a cofactor. Mg(2+) serves as cofactor.

It localises to the cytoplasm. It catalyses the reaction Endonucleolytic cleavage to 5'-phosphomonoester.. Functionally, endonuclease that specifically degrades the RNA of RNA-DNA hybrids. The sequence is that of Ribonuclease HII from Bordetella pertussis (strain Tohama I / ATCC BAA-589 / NCTC 13251).